A 302-amino-acid polypeptide reads, in one-letter code: Transmembrane protein 191 (302 aa).

Positions 5 to 147 (QEQLLQLQKD…HLELAEAKFS (143 aa)) form a coiled coil. Residues 39 to 66 (LTGRLEELRERERSLQRRRSQASRAIRG) form a disordered region. The segment covering 42-53 (RLEELRERERSL) has biased composition (basic and acidic residues). Residues 242-262 (LQTLLLLPLGFLVLPLIYVVL) traverse the membrane as a helical segment.

The protein belongs to the TMEM191 family.

It localises to the membrane. This chain is Transmembrane protein 191, found in Mus musculus (Mouse).